Reading from the N-terminus, the 232-residue chain is Ribonuclease 3 (232 aa).

In terms of domain architecture, RNase III spans Phe6–Gly133. Glu46 lines the Mg(2+) pocket. Residue Asp50 is part of the active site. 2 residues coordinate Mg(2+): Asp119 and Glu122. Glu122 is a catalytic residue. The DRBM domain maps to Asp160 to Lys229.

This sequence belongs to the ribonuclease III family. In terms of assembly, homodimer. Requires Mg(2+) as cofactor.

It is found in the cytoplasm. It catalyses the reaction Endonucleolytic cleavage to 5'-phosphomonoester.. Functionally, digests double-stranded RNA. Involved in the processing of primary rRNA transcript to yield the immediate precursors to the large and small rRNAs (23S and 16S). Processes some mRNAs, and tRNAs when they are encoded in the rRNA operon. Processes pre-crRNA and tracrRNA of type II CRISPR loci if present in the organism. This is Ribonuclease 3 from Clostridium botulinum (strain Alaska E43 / Type E3).